The chain runs to 341 residues: Phenylalanine--tRNA ligase alpha subunit (341 aa).

Glutamate 254 contributes to the Mg(2+) binding site.

The protein belongs to the class-II aminoacyl-tRNA synthetase family. Phe-tRNA synthetase alpha subunit type 1 subfamily. Tetramer of two alpha and two beta subunits. Mg(2+) serves as cofactor.

It localises to the cytoplasm. It carries out the reaction tRNA(Phe) + L-phenylalanine + ATP = L-phenylalanyl-tRNA(Phe) + AMP + diphosphate + H(+). This is Phenylalanine--tRNA ligase alpha subunit from Chlorobium phaeobacteroides (strain DSM 266 / SMG 266 / 2430).